The following is a 42-amino-acid chain: Potassium channel toxin gamma-KTx 1.5 (42 aa).

Intrachain disulfides connect Cys5–Cys23, Cys11–Cys34, Cys20–Cys39, and Cys24–Cys41.

The protein belongs to the ergtoxin family. Gamma-KTx 1 subfamily. Expressed by the venom gland.

It localises to the secreted. In terms of biological role, blocks Kv11/ERG potassium channels. The chain is Potassium channel toxin gamma-KTx 1.5 from Centruroides limpidus (Mexican scorpion).